Reading from the N-terminus, the 319-residue chain is Putative replication factor C small subunit R395 (319 aa).

45–52 (GSPGVGKT) is an ATP binding site.

This sequence belongs to the activator 1 small subunits family. RfcS subfamily.

Part of the RFC clamp loader complex which loads the PCNA sliding clamp onto DNA. This Acanthamoeba polyphaga mimivirus (APMV) protein is Putative replication factor C small subunit R395.